We begin with the raw amino-acid sequence, 104 residues long: uncharacterized protein (104 aa).

Positions 62–92 (SSPAASSHPRKRGKEKKERTPTERLAAPARK) are disordered.

This is an uncharacterized protein from Human adenovirus B serotype 7 (HAdV-7).